Consider the following 281-residue polypeptide: Alpha-D-ribose 1-methylphosphonate 5-phosphate C-P lyase (281 aa).

It belongs to the PhnJ family. As to quaternary structure, forms a complex with PhnG, PhnH, PhnI and PhnK with the suggested composition PhnG(4)H(2)I(2)J(2)K. The cofactor is [4Fe-4S] cluster.

The enzyme catalyses alpha-D-ribose 1-methylphosphonate 5-phosphate + AH2 + S-adenosyl-L-methionine = alpha-D-ribose 1,2-cyclic phosphate 5-phosphate + methane + 5'-deoxyadenosine + L-methionine + A + H(+). In terms of biological role, catalyzes the breakage of the C-P bond in alpha-D-ribose 1-methylphosphonate 5-phosphate (PRPn) forming alpha-D-ribose 1,2-cyclic phosphate 5-phosphate (PRcP). This is Alpha-D-ribose 1-methylphosphonate 5-phosphate C-P lyase (phnJ) from Escherichia coli (strain K12).